Reading from the N-terminus, the 1108-residue chain is cGMP-inhibited 3',5'-cyclic phosphodiesterase 3B (1108 aa).

A compositionally biased stretch (basic and acidic residues) spans 1–11 (MRKDERERDTP). The tract at residues 1 to 32 (MRKDERERDTPAMRSPPPPPPPATATAASPPE) is disordered. The interval 1–32 (MRKDERERDTPAMRSPPPPPPPATATAASPPE) is interaction with RAPGEF3. The span at 14-23 (RSPPPPPPPA) shows a compositional bias: pro residues. Phosphoserine is present on serine 15. The next 6 membrane-spanning stretches (helical) occupy residues 73–93 (AGARLSLAALAAFVLAALLGA), 114–134 (LSLSPLFSIACAFFFLTCFLT), 144–164 (AGSWWLLALPACCYLGDFAAW), 175–195 (AAAAAGRLCLVLSCVGLLTLA), 204–224 (VLVLLFAGLVWWVSFSGLGAL), and 231–251 (LLSCLVGGAGCLLALGLDHFF). Serine 279 carries the post-translational modification Phosphoserine; by PKB/AKT1 or PKB/AKT2. Residues serine 280 and serine 427 each carry the phosphoserine modification. Positions 405-448 (DRKLHKGLSSKPSFPTAQLRRSSGASGLLTSEHHSRWDRSGGKR) are disordered. The span at 414–433 (SKPSFPTAQLRRSSGASGLL) shows a compositional bias: polar residues. An interaction with PIK3R6 region spans residues 421 to 445 (AQLRRSSGASGLLTSEHHSRWDRSG). Residues 435–445 (SEHHSRWDRSG) are compositionally biased toward basic and acidic residues. The region spanning 633 to 1070 (PNIDQEVLLD…KIWKEIIEEE (438 aa)) is the PDEase domain. Histidine 719 (proton donor) is an active-site residue. Histidine 719 is a binding site for AMP. Mg(2+) is bound by residues histidine 723, histidine 803, aspartate 804, and aspartate 919. Aspartate 804, aspartate 919, and glutamine 970 together coordinate AMP. The span at 999–1033 (EEGDDTESDDDDDDDDDDDDDDDEELDSDDEETED) shows a compositional bias: acidic residues. The interval 999–1042 (EEGDDTESDDDDDDDDDDDDDDDEELDSDDEETEDNLNPKPQRR) is disordered.

It belongs to the cyclic nucleotide phosphodiesterase family. PDE3 subfamily. In terms of assembly, homodimer. Interacts with PIK3CG; regulates PDE3B activity and thereby cAMP levels in cells. Interacts with RAPGEF3 and PIK3R6; form a signaling complex that regulates phosphatidylinositol 3-kinase gamma in angiogenesis. Interacts with ABHD15; this interaction regulates PDE3B's stability and expression and, thereby, impacts the antilipolytic action of insulin. It depends on Mg(2+) as a cofactor. Mn(2+) is required as a cofactor. Phosphorylation at Ser-279 mediates insulin-induced activation of PDE3B. As to expression, abundant in adipose tissues.

It localises to the membrane. It catalyses the reaction a nucleoside 3',5'-cyclic phosphate + H2O = a nucleoside 5'-phosphate + H(+). The catalysed reaction is 3',5'-cyclic AMP + H2O = AMP + H(+). The enzyme catalyses 3',5'-cyclic GMP + H2O = GMP + H(+). Its activity is regulated as follows. Inhibited by cGMP. In terms of biological role, cyclic nucleotide phosphodiesterase with a dual-specificity for the second messengers cAMP and cGMP, which are key regulators of many important physiological processes. Regulates angiogenesis by inhibiting the cAMP-dependent guanine nucleotide exchange factor RAPGEF3 and downstream phosphatidylinositol 3-kinase gamma-mediated signaling. Controls cardiac contractility by reducing cAMP concentration in cardiocytes. The polypeptide is cGMP-inhibited 3',5'-cyclic phosphodiesterase 3B (Rattus norvegicus (Rat)).